The primary structure comprises 141 residues: Nucleoside diphosphate kinase (141 aa).

Residues K11, F59, R87, T93, R104, and N114 each contribute to the ATP site. The active-site Pros-phosphohistidine intermediate is H117.

This sequence belongs to the NDK family. In terms of assembly, homotetramer. Requires Mg(2+) as cofactor.

The protein localises to the cytoplasm. The catalysed reaction is a 2'-deoxyribonucleoside 5'-diphosphate + ATP = a 2'-deoxyribonucleoside 5'-triphosphate + ADP. It catalyses the reaction a ribonucleoside 5'-diphosphate + ATP = a ribonucleoside 5'-triphosphate + ADP. Functionally, major role in the synthesis of nucleoside triphosphates other than ATP. The ATP gamma phosphate is transferred to the NDP beta phosphate via a ping-pong mechanism, using a phosphorylated active-site intermediate. This is Nucleoside diphosphate kinase from Delftia acidovorans (strain DSM 14801 / SPH-1).